The following is a 398-amino-acid chain: Phosphoglycerate kinase (398 aa).

Substrate-binding positions include 20–22 (DFN), Arg-35, 58–61 (HLGK), Arg-118, and Arg-155. ATP-binding positions include Lys-208, Gly-296, Glu-327, and 354–357 (GGDS).

Belongs to the phosphoglycerate kinase family. As to quaternary structure, monomer.

Its subcellular location is the cytoplasm. The enzyme catalyses (2R)-3-phosphoglycerate + ATP = (2R)-3-phospho-glyceroyl phosphate + ADP. The protein operates within carbohydrate degradation; glycolysis; pyruvate from D-glyceraldehyde 3-phosphate: step 2/5. The chain is Phosphoglycerate kinase from Fusobacterium nucleatum subsp. nucleatum (strain ATCC 25586 / DSM 15643 / BCRC 10681 / CIP 101130 / JCM 8532 / KCTC 2640 / LMG 13131 / VPI 4355).